Here is a 494-residue protein sequence, read N- to C-terminus: DEAD-box ATP-dependent RNA helicase 20 (494 aa).

Residues 1–20 (MSRFDGRAADPGSYRDRRSE) show a composition bias toward basic and acidic residues. The tract at residues 1–39 (MSRFDGRAADPGSYRDRRSEGAFGGGTRAFAPTSKADSA) is disordered. The segment covering 29–39 (AFAPTSKADSA) has biased composition (low complexity). The short motif at 91 to 119 (REFRDVGFPEYVLQEITKAGFVEPTPIQS) is the Q motif element. The 176-residue stretch at 122–297 (WPMALRGRDL…RNFLFDPYKV (176 aa)) folds into the Helicase ATP-binding domain. 135–142 (AETGSGKT) is an ATP binding site. Positions 245-248 (DEAD) match the DEAD box motif. The Helicase C-terminal domain occupies 325–470 (KLVNLLEDIM…KVSPELANMG (146 aa)). The tract at residues 465 to 494 (ELANMGRGAPPPSSGHRDRYRGYGGGRSWS) is disordered.

The protein belongs to the DEAD box helicase family. DDX5/DBP2 subfamily.

It localises to the nucleus. The catalysed reaction is ATP + H2O = ADP + phosphate + H(+). ATP-dependent RNA helicase involved nonsense-mediated mRNA decay and ribosome biogenesis through rRNA processing. This chain is DEAD-box ATP-dependent RNA helicase 20, found in Oryza sativa subsp. japonica (Rice).